The sequence spans 330 residues: MNWLTPELIEILVAVLKAIVILLAVVVCGALLSFVERRLLGWWQDRYGPNRVGPFGMFQIAADMIKMFFKEDWTPPFADRFIFVLAPMIAFAAMLMAFAIIPITPTWGVADLNIGILFFFAMAGLSVYAVLFAGWSSNNKFALLGSLRASAQTISYEVFLALALMGVVAQVGSFNMRDIVDYQAQNLWFIIPQFFGFCTFFIAGVAVTHRHPFDQPEAEQELADGYHIEYAGMKWGMFFVGEYVGIVTISALLVTLFFGGWHGPFGLLPQIPFFWFALKTAFFIMIFILLRASIPRPRYDQVMAFSWKFCLPLTLINLLVTGALVLAAAQ.

8 consecutive transmembrane segments (helical) span residues 11 to 31, 81 to 101, 114 to 134, 154 to 174, 187 to 207, 238 to 258, 270 to 290, and 309 to 329; these read ILVA…CGAL, FIFV…FAII, IGIL…LFAG, ISYE…VGSF, LWFI…GVAV, FFVG…TLFF, QIPF…FILL, and FCLP…LAAA.

This sequence belongs to the complex I subunit 1 family. NDH-1 is composed of 13 different subunits. Subunits NuoA, H, J, K, L, M, N constitute the membrane sector of the complex.

It is found in the cell inner membrane. The enzyme catalyses a quinone + NADH + 5 H(+)(in) = a quinol + NAD(+) + 4 H(+)(out). NDH-1 shuttles electrons from NADH, via FMN and iron-sulfur (Fe-S) centers, to quinones in the respiratory chain. The immediate electron acceptor for the enzyme in this species is believed to be ubiquinone. Couples the redox reaction to proton translocation (for every two electrons transferred, four hydrogen ions are translocated across the cytoplasmic membrane), and thus conserves the redox energy in a proton gradient. This subunit may bind ubiquinone. In Ectopseudomonas mendocina (strain ymp) (Pseudomonas mendocina), this protein is NADH-quinone oxidoreductase subunit H.